Here is a 101-residue protein sequence, read N- to C-terminus: Small ribosomal subunit protein bS18c (101 aa).

The disordered stretch occupies residues 82-101 (KQFERAESTPRTPGPRTRNK).

The protein belongs to the bacterial ribosomal protein bS18 family. As to quaternary structure, part of the 30S ribosomal subunit.

It localises to the plastid. The protein resides in the chloroplast. This is Small ribosomal subunit protein bS18c from Platanus occidentalis (Sycamore).